We begin with the raw amino-acid sequence, 104 residues long: Zinc-containing ferredoxin-1 (104 aa).

Residues Gly2–Thr37 form an N-terminal extension region. Zn(2+) is bound by residues His17 and His20. N6-methyllysine is present on Lys30. Residue His35 participates in Zn(2+) binding. 4Fe-4S ferredoxin-type domains follow at residues Ile38–Thr66 and Lys75–Pro104. [3Fe-4S] cluster contacts are provided by Cys46 and Cys52. Position 56 (Cys56) interacts with [4Fe-4S] cluster. Asp77 is a Zn(2+) binding site. 3 residues coordinate [4Fe-4S] cluster: Cys84, Cys87, and Cys90. Cys94 is a [3Fe-4S] cluster binding site.

[3Fe-4S] cluster serves as cofactor. [4Fe-4S] cluster is required as a cofactor. Requires Zn(2+) as cofactor.

In terms of biological role, ferredoxins are iron-sulfur proteins that transfer electrons in a wide variety of metabolic reactions. The polypeptide is Zinc-containing ferredoxin-1 (zfx1) (Sulfurisphaera tokodaii (strain DSM 16993 / JCM 10545 / NBRC 100140 / 7) (Sulfolobus tokodaii)).